Consider the following 103-residue polypeptide: Early nodulin-12 (103 aa).

The first 24 residues, 1 to 24 (MASFSLSILVFFFSALVLVPQGFA), serve as a signal peptide directing secretion. Repeat copies occupy residues 34 to 38 (PPQTK) and 39 to 43 (PPVNK). The interval 34 to 88 (PPQTKPPVNKPSHKEPPVNKPPHKEPPVHKPPHKDPPVNKPPQKESPVHKPPRKE) is 11 X 5 AA approximate tandem repeats of P-P-[QVHR]-[TNKH]-[KED]. The tract at residues 34–103 (PPQTKPPVNK…HPPAEDNIHF (70 aa)) is disordered. Residues 44–48 (PSHKE) form a 3; approximate repeat. Positions 45–103 (SHKEPPVNKPPHKEPPVHKPPHKDPPVNKPPQKESPVHKPPRKESPTHRHPPAEDNIHF) are enriched in basic and acidic residues. Repeat copies occupy residues 49–53 (PPVNK), 54–58 (PPHKE), 59–63 (PPVHK), 64–68 (PPHKD), 69–73 (PPVNK), and 74–78 (PPQKE). The stretch at 79–83 (SPVHK) is one 10; approximate repeat. Copy 11 of the repeat occupies 84 to 88 (PPRKE).

The protein belongs to the plant proline-rich protein superfamily. ENOD12 family. Root nodules.

The protein resides in the secreted. It is found in the cell wall. Functionally, involved in the infection process during the plant-rhizobium interaction. This is Early nodulin-12 (ENOD12) from Medicago truncatula (Barrel medic).